The primary structure comprises 438 residues: Iroquois-class homeodomain protein IRX-6 (438 aa).

Residues 143–205 (SAGRRKNATR…NARRRLKKEN (63 aa)) constitute a DNA-binding region (homeobox). Disordered stretches follow at residues 205 to 270 (NKMT…EAAV) and 388 to 438 (PRDS…GAEG). Residues 214–223 (KGGEERKADS) are compositionally biased toward basic and acidic residues. Acidic residues predominate over residues 252–268 (LEDLEEEEEEEEAEEEA).

Belongs to the TALE/IRO homeobox family. Expressed in a subset of retinal ganglion cells and bipolar cells; including in type 2 and type 3a bipolar cells.

It is found in the nucleus. Transcription factor. Binds to the iroquois binding site (IBS) motif of target genes to regulate gene expression; functions as a transcriptional activator or repressor. Modulates expression of RCVRN, VSX1, BHLHE22/BHLHB5 and TACR3/Nk3r. Required downstream of retinal bipolar cell specification for the terminal differentiation of type 2, type 3a and possibly type 6 bipolar cells. In Mus musculus (Mouse), this protein is Iroquois-class homeodomain protein IRX-6 (Irx6).